We begin with the raw amino-acid sequence, 649 residues long: MPLGQRAGDKSESRYCGVEVLDFPAGEELPAVLSHSLSSSFDFLLAPLVDPDYRPTPGSVLPVAASDLVLGPAQWSSHIVGKINEWIDLDAEDEQLRLDSEITLKQEIAWASHLSLQACVLPPPKRSSCANYARVVNHILQGLTNLQLWLRIPLEKSEPMDEDHDGAKDNSDMSDTVDSWEWWNSFRLLCEHSSQLCVALDVLSTLPSMNSLGRWFGEPVRAAILQTNAFLTNARGYPCLSKRHQKLLTGFFNHSVQVIISGRSNHNVSQGGVLSGDENHTEDTAVRHALSPYLDYIAYIYQRMDPLPEQERFEINYRDFLQSPLQPLMDNLEAQTYETFEKDTVKYTQYQRAIAKALVDRVSDDDVSTTKTVLMVVGAGRGPLVRASLQAAEETGRKLKVYAVEKNPNAVITLHSLIKLEGWESLVTIISSDMRCWEAPEKADILVSELLGSFGDNELSPECLDGAQRFLKPDGISIPSSYTSFIEPITASKLHNDIKAHKDIAHFETAYVVKLHRIARLAPTQSVFTFDHPNPSPNASNQRYTKLKFEIPQETGSCLVHGFAGYFDAVLYKDVHLGIEPNTATPNMFSWFPIFFPLRKPIYVPSKTPIEVHFWRCCGATKVWYEWAVTAPSPSPIHNSNGRSYWVGL.

Residues Lys-10–Ile-300 form a TIM barrel region. Residues Leu-321–Trp-627 form the SAM-dependent MTase PRMT-type domain. Tyr-337 serves as a coordination point for S-adenosyl-L-methionine. Position 340 (Phe-340) interacts with a protein. S-adenosyl-L-methionine is bound by residues Lys-346–Tyr-347, Glu-405, and Asp-433–Met-434. Residues Glu-449 and Glu-458 each contribute to the a protein site. Catalysis depends on proton donor/acceptor residues Glu-449 and Glu-458. The tract at residues Pro-479–Leu-649 is beta barrel. The interval Ala-491–Phe-507 is dimerization.

This sequence belongs to the class I-like SAM-binding methyltransferase superfamily. Protein arginine N-methyltransferase family.

The protein localises to the cytoplasm. The enzyme catalyses L-arginyl-[protein] + 2 S-adenosyl-L-methionine = N(omega),N(omega)'-dimethyl-L-arginyl-[protein] + 2 S-adenosyl-L-homocysteine + 2 H(+). In terms of biological role, methylates arginine residues in proteins such as histone H4. The protein is Protein arginine N-methyltransferase 5 (PRMT5) of Oryza sativa subsp. indica (Rice).